Reading from the N-terminus, the 381-residue chain is DNA primase DnaG (381 aa).

The 87-residue stretch at 173-259 (DAILVVEGRS…EVEDLEKDEI (87 aa)) folds into the Toprim domain. Mg(2+) is bound by residues Glu179, Asp221, and Asp223.

Belongs to the archaeal DnaG primase family. As to quaternary structure, forms a ternary complex with MCM helicase and DNA. Component of the archaeal exosome complex. Mg(2+) is required as a cofactor.

It catalyses the reaction ssDNA + n NTP = ssDNA/pppN(pN)n-1 hybrid + (n-1) diphosphate.. Functionally, RNA polymerase that catalyzes the synthesis of short RNA molecules used as primers for DNA polymerase during DNA replication. Also part of the exosome, which is a complex involved in RNA degradation. Acts as a poly(A)-binding protein that enhances the interaction between heteromeric, adenine-rich transcripts and the exosome. This is DNA primase DnaG from Methanothermobacter thermautotrophicus (strain ATCC 29096 / DSM 1053 / JCM 10044 / NBRC 100330 / Delta H) (Methanobacterium thermoautotrophicum).